The primary structure comprises 310 residues: Glutaminase (310 aa).

Residues Ser67, Asn118, Glu161, Asn168, Tyr192, Tyr244, and Val262 each contribute to the substrate site.

It belongs to the glutaminase family. In terms of assembly, homotetramer.

The enzyme catalyses L-glutamine + H2O = L-glutamate + NH4(+). This Legionella pneumophila (strain Paris) protein is Glutaminase.